A 1756-amino-acid chain; its full sequence is Periplakin (1756 aa).

At Ser14 the chain carries Phosphoserine. Coiled-coil stretches lie at residues 16–125 and 188–389; these read TVQT…KQIY and KEQN…QQVV. Spectrin repeat units lie at residues 216 to 317, 323 to 485, 505 to 612, and 733 to 861; these read QDYM…SHLK, HQFH…RTLQ, RQLL…EKVD, and EHFH…QNLE. The SH3 domain occupies 399 to 455; the sequence is LKPIPVEALCDFEGEQGLISRGYSYTLQKNNGESWELMDSAGNKLIAPAVCFVIPPT. Ser465 carries the post-translational modification Phosphoserine. Coiled-coil stretches lie at residues 585–820 and 886–1645; these read LLRT…GRRS and DSGV…SVAV. Residues Ser887, Ser949, Ser1584, and Ser1657 each carry the phosphoserine modification. The tract at residues 1557-1756 is interacts with BFSP2 and VIM; the sequence is ELDFLREENH…ELAVLVSGQK (200 aa). 2 Plectin repeats span residues 1651 to 1685 and 1700 to 1735; these read ENHLRRSIVVIHPDTGRELSPEEAHRAGLIDWNMF and VKGPNGESSVIHDRKSGKKFSIEEALQSGRLTPAQY.

This sequence belongs to the plakin or cytolinker family. Homodimer or a heterodimer with EVPL. Found in a complex composed of PPL (via C-terminal linker domain), BFSP1 and BFSP2 in the retinal lens. Within the complex interacts (via C-terminal linker domain) with BFSP2. Interacts with VIM. Binds to the PH domain of AKT1. Interacts with FCGR1A. May interact with PPHLN1. As to expression, expressed in stratified squamous epithelia and in some other epithelia.

The protein localises to the cell junction. It localises to the desmosome. It is found in the cytoplasm. Its subcellular location is the cytoskeleton. The protein resides in the cell membrane. Its function is as follows. Component of the cornified envelope of keratinocytes. May link the cornified envelope to desmosomes and intermediate filaments. May act as a localization signal in PKB/AKT-mediated signaling. In Homo sapiens (Human), this protein is Periplakin (PPL).